The chain runs to 728 residues: Catalase-peroxidase 1 (728 aa).

Residues 1 to 22 (MDKTQSSQGKCPVMHGANSAVA) form the signal peptide. The tryptophyl-tyrosyl-methioninium (Trp-Tyr) (with M-251) cross-link spans 97-225 (WHSAGTYRVA…LAAVMMGLIY (129 aa)). His-98 functions as the Proton acceptor in the catalytic mechanism. Residues 225 to 251 (YVNPEGVDGKPDPLRTAQDVRVTFARM) constitute a cross-link (tryptophyl-tyrosyl-methioninium (Tyr-Met) (with W-97)). A heme b-binding site is contributed by His-266.

This sequence belongs to the peroxidase family. Peroxidase/catalase subfamily. As to quaternary structure, homodimer or homotetramer. Requires heme b as cofactor. Formation of the three residue Trp-Tyr-Met cross-link is important for the catalase, but not the peroxidase activity of the enzyme.

It carries out the reaction H2O2 + AH2 = A + 2 H2O. The enzyme catalyses 2 H2O2 = O2 + 2 H2O. In terms of biological role, bifunctional enzyme with both catalase and broad-spectrum peroxidase activity. The polypeptide is Catalase-peroxidase 1 (Shewanella sp. (strain MR-4)).